Consider the following 280-residue polypeptide: Protoheme IX farnesyltransferase 2 (280 aa).

9 consecutive transmembrane segments (helical) span residues 12–32, 35–55, 76–96, 98–118, 129–149, 158–178, 199–221, 226–248, and 255–275; these read VIWLLILASVAGYIYGGGGVD, LFSLLAVAFLSTGGSAAFNHY, LITPNAALAYSLALSATGISL, FLLLGLLPGLFVLLGWLFYAV, WLNIFGGGFAGNAVFLGGYAL, AVLISFAIYLWTPSHIWALAF, ERAVAVISAINAAAAAYILWLYL, GAGGAIVALGVAATIATSIYAAV, and MWKMYKASSPMLTLFLIALMI.

This sequence belongs to the UbiA prenyltransferase family. Protoheme IX farnesyltransferase subfamily.

It localises to the cell membrane. It catalyses the reaction heme b + (2E,6E)-farnesyl diphosphate + H2O = Fe(II)-heme o + diphosphate. It functions in the pathway porphyrin-containing compound metabolism; heme O biosynthesis; heme O from protoheme: step 1/1. In terms of biological role, converts heme B (protoheme IX) to heme O by substitution of the vinyl group on carbon 2 of heme B porphyrin ring with a hydroxyethyl farnesyl side group. The polypeptide is Protoheme IX farnesyltransferase 2 (Pyrobaculum aerophilum (strain ATCC 51768 / DSM 7523 / JCM 9630 / CIP 104966 / NBRC 100827 / IM2)).